The primary structure comprises 26 residues: Hemocyanin subunit 5 (26 aa).

Belongs to the tyrosinase family. Hemocyanin subfamily. As to expression, hemolymph.

It is found in the secreted. It localises to the extracellular space. In terms of biological role, hemocyanins are copper-containing oxygen carriers occurring freely dissolved in the hemolymph of many mollusks and arthropods. The chain is Hemocyanin subunit 5 from Maja squinado (Mediterranean spider crab).